Consider the following 350-residue polypeptide: FAD:protein FMN transferase (350 aa).

Positions 1–19 (MKMTFCRAVCLAAAFLLMG) are cleaved as a signal peptide. C20 is lipidated: N-palmitoyl cysteine. C20 is lipidated: S-diacylglycerol cysteine. FAD contacts are provided by residues M41, Y78, 119–121 (AMD), and D181. Residue T184 coordinates Mg(2+). Positions 187 and 272 each coordinate FAD. Mg(2+) contacts are provided by D298, D301, and T302.

It belongs to the ApbE family. As to quaternary structure, homodimer. Requires Mg(2+) as cofactor.

It localises to the cell inner membrane. It catalyses the reaction L-threonyl-[protein] + FAD = FMN-L-threonyl-[protein] + AMP + H(+). Flavin transferase that catalyzes the transfer of the FMN moiety of FAD and its covalent binding to the hydroxyl group of a threonine residue in a target flavoprotein such as NqrB and NqrC, two subunits of the NQR complex. The protein is FAD:protein FMN transferase of Salmonella typhimurium (strain LT2 / SGSC1412 / ATCC 700720).